Consider the following 158-residue polypeptide: uncharacterized protein (158 aa).

Positions A77–K132 are disordered. Residues S100–K120 show a composition bias toward basic residues.

This is an uncharacterized protein from Acanthamoeba polyphaga mimivirus (APMV).